Here is a 312-residue protein sequence, read N- to C-terminus: Olfactory receptor 6N1 (312 aa).

Topologically, residues 1–25 are extracellular; sequence MDTGNWSQVAEFIILGFPHLQGVQI. Residue Asn-5 is glycosylated (N-linked (GlcNAc...) asparagine). A helical transmembrane segment spans residues 26-46; the sequence is YLFLLLLLIYLMTVLGNLLIF. At 47–54 the chain is on the cytoplasmic side; the sequence is LVVCLDSR. The chain crosses the membrane as a helical span at residues 55–75; that stretch reads LHTPMYHFVSILSFSELGYTA. At 76–99 the chain is on the extracellular side; that stretch reads ATIPKMLANLLSEKKTISFSGCLL. Cys-97 and Cys-189 form a disulfide bridge. Residues 100–120 traverse the membrane as a helical segment; the sequence is QIYFFHSLGATECYLLTAMAY. The Cytoplasmic portion of the chain corresponds to 121–139; it reads DRYLAICRPLHYPTLMTPT. The chain crosses the membrane as a helical span at residues 140–160; sequence LCAEIAIGCWLGGLAGPVVEI. Topologically, residues 161 to 197 are extracellular; the sequence is SLISRLPFCGPNRIQHVFCDFPPVLSLACTDTSINVL. A helical transmembrane segment spans residues 198-217; sequence VDFVINSCKILATFLLILCS. Residues 218–237 are Cytoplasmic-facing; sequence YVQIICTVLRIPSAAGKRKA. Residues 238-258 traverse the membrane as a helical segment; sequence ISTCASHFTVVLIFYGSILSM. The Extracellular portion of the chain corresponds to 259-271; it reads YVQLKKSYSLDYD. A helical transmembrane segment spans residues 272–292; that stretch reads QALAVVYSVLTPFLNPFIYSL. Topologically, residues 293-312 are cytoplasmic; it reads RNKEIKEAVRRQLKRIGILA.

This sequence belongs to the G-protein coupled receptor 1 family.

It is found in the cell membrane. Its function is as follows. Odorant receptor. The polypeptide is Olfactory receptor 6N1 (OR6N1) (Homo sapiens (Human)).